The primary structure comprises 1038 residues: Probable ubiquitin conjugation factor E4 (1038 aa).

Disordered stretches follow at residues 430–459 and 1010–1038; these read ANDA…ASGQ and SHQS…MLID. Residues 446-459 are compositionally biased toward low complexity; sequence SKEATSSSSNASGQ. A U-box domain is found at 940-1014; the sequence is EIPDEFLDPI…DEFVKSHQSK (75 aa). A compositionally biased stretch (basic and acidic residues) spans 1017 to 1028; the sequence is TSGEDSSNKERI. Over residues 1029 to 1038 the composition is skewed to polar residues; the sequence is QTTNSDMLID.

This sequence belongs to the ubiquitin conjugation factor E4 family.

Its subcellular location is the cytoplasm. The protein localises to the nucleus. It catalyses the reaction S-ubiquitinyl-[E2 ubiquitin-conjugating enzyme]-L-cysteine + [acceptor protein]-L-lysine = [E2 ubiquitin-conjugating enzyme]-L-cysteine + N(6)-ubiquitinyl-[acceptor protein]-L-lysine.. It functions in the pathway protein modification; protein ubiquitination. Ubiquitin-protein ligase that may function as an E3 ligase in conjunction with specific E1 and E2 ligases. May also function as an E4 ligase mediating the assembly of polyubiquitin chain assembly on substrates monoubiquitinated by another E3 ubiquitin ligase. This chain is Probable ubiquitin conjugation factor E4 (PUB1), found in Arabidopsis thaliana (Mouse-ear cress).